We begin with the raw amino-acid sequence, 740 residues long: NAD(P)H-quinone oxidoreductase subunit 5, chloroplastic (740 aa).

The next 16 helical transmembrane spans lie at 9–29 (WIIPFIPLPVPMLIGAGLFLF), 40–60 (WAFQSVLLLSIVMVFSIYLSI), 89–109 (IDPLTSIMSILITTVGIMVLI), 125–145 (FAYMSFFSTSMLGLVTSSNLI), 147–167 (IYIFWELVGLCSYLLIGFWFT), 185–205 (GDFGLLLGILGFYWITGSFEF), 219–239 (NEVDFLFVTLCAVLLFAGAVA), 258–278 (TPISALIHAATMVAAGIFLVA), 286–306 (VIPYIMYLISVIGIITVLLGA), 327–347 (LGYMMLALGMGSYRSALFHLI), 354–374 (ALLFLGSGSIIHSMETIVGYS), 396–416 (ITFLLGTLSLCGIPPLACFWS), 425–445 (WLYSPIFAIIAWATAGLTAFY), 543–563 (LFPIFVLGLFTLFVGSIGIPF), 602–622 (VLSVSIAYFGIFIASFLYKPI), and 717–737 (SYLFLYLAYVSIFLLVYYLLF).

Belongs to the complex I subunit 5 family. As to quaternary structure, NDH is composed of at least 16 different subunits, 5 of which are encoded in the nucleus.

It is found in the plastid. Its subcellular location is the chloroplast thylakoid membrane. The catalysed reaction is a plastoquinone + NADH + (n+1) H(+)(in) = a plastoquinol + NAD(+) + n H(+)(out). It carries out the reaction a plastoquinone + NADPH + (n+1) H(+)(in) = a plastoquinol + NADP(+) + n H(+)(out). Functionally, NDH shuttles electrons from NAD(P)H:plastoquinone, via FMN and iron-sulfur (Fe-S) centers, to quinones in the photosynthetic chain and possibly in a chloroplast respiratory chain. The immediate electron acceptor for the enzyme in this species is believed to be plastoquinone. Couples the redox reaction to proton translocation, and thus conserves the redox energy in a proton gradient. The sequence is that of NAD(P)H-quinone oxidoreductase subunit 5, chloroplastic (ndhF) from Nicotiana tabacum (Common tobacco).